We begin with the raw amino-acid sequence, 117 residues long: DNA-directed RNA polymerase subunit omega (117 aa).

This sequence belongs to the RNA polymerase subunit omega family. The RNAP catalytic core consists of 2 alpha, 1 beta, 1 beta' and 1 omega subunit. When a sigma factor is associated with the core the holoenzyme is formed, which can initiate transcription.

The catalysed reaction is RNA(n) + a ribonucleoside 5'-triphosphate = RNA(n+1) + diphosphate. Promotes RNA polymerase assembly. Latches the N- and C-terminal regions of the beta' subunit thereby facilitating its interaction with the beta and alpha subunits. The polypeptide is DNA-directed RNA polymerase subunit omega (Cereibacter sphaeroides (strain ATCC 17025 / ATH 2.4.3) (Rhodobacter sphaeroides)).